A 238-amino-acid chain; its full sequence is Endonuclease V (238 aa).

Mg(2+)-binding residues include aspartate 46 and aspartate 116.

The protein belongs to the endonuclease V family. The cofactor is Mg(2+).

Its subcellular location is the cytoplasm. It carries out the reaction Endonucleolytic cleavage at apurinic or apyrimidinic sites to products with a 5'-phosphate.. DNA repair enzyme involved in the repair of deaminated bases. Selectively cleaves double-stranded DNA at the second phosphodiester bond 3' to a deoxyinosine leaving behind the intact lesion on the nicked DNA. The chain is Endonuclease V from Bacillus subtilis (strain 168).